Consider the following 300-residue polypeptide: uncharacterized protein (300 aa).

A disordered region spans residues 230–251 (LRQSTSRQSISRQSISRQSTSR). Residues 231–251 (RQSTSRQSISRQSISRQSTSR) show a composition bias toward low complexity.

This is an uncharacterized protein from Acanthamoeba polyphaga (Amoeba).